The primary structure comprises 44 residues: Thymosin beta-4, Y-chromosomal (44 aa).

Positions M1–S44 are disordered. 2 stretches are compositionally biased toward basic and acidic residues: residues E9–E25 and E33–S44.

Belongs to the thymosin beta family. In terms of tissue distribution, ubiquitous.

It is found in the cytoplasm. Its subcellular location is the cytoskeleton. Its function is as follows. Plays an important role in the organization of the cytoskeleton. Binds to and sequesters actin monomers (G actin) and therefore inhibits actin polymerization. This chain is Thymosin beta-4, Y-chromosomal (TMSB4Y), found in Homo sapiens (Human).